The primary structure comprises 146 residues: D-aminoacyl-tRNA deacylase (146 aa).

Residues 137–138 (GP) carry the Gly-cisPro motif, important for rejection of L-amino acids motif.

It belongs to the DTD family. As to quaternary structure, homodimer.

It localises to the cytoplasm. It catalyses the reaction glycyl-tRNA(Ala) + H2O = tRNA(Ala) + glycine + H(+). The enzyme catalyses a D-aminoacyl-tRNA + H2O = a tRNA + a D-alpha-amino acid + H(+). Its function is as follows. An aminoacyl-tRNA editing enzyme that deacylates mischarged D-aminoacyl-tRNAs. Also deacylates mischarged glycyl-tRNA(Ala), protecting cells against glycine mischarging by AlaRS. Acts via tRNA-based rather than protein-based catalysis; rejects L-amino acids rather than detecting D-amino acids in the active site. By recycling D-aminoacyl-tRNA to D-amino acids and free tRNA molecules, this enzyme counteracts the toxicity associated with the formation of D-aminoacyl-tRNA entities in vivo and helps enforce protein L-homochirality. This Halalkalibacterium halodurans (strain ATCC BAA-125 / DSM 18197 / FERM 7344 / JCM 9153 / C-125) (Bacillus halodurans) protein is D-aminoacyl-tRNA deacylase.